The chain runs to 203 residues: ATP-dependent Clp protease proteolytic subunit 2 (203 aa).

Serine 97 functions as the Nucleophile in the catalytic mechanism. Histidine 122 is a catalytic residue.

It belongs to the peptidase S14 family. In terms of assembly, fourteen ClpP subunits assemble into 2 heptameric rings which stack back to back to give a disk-like structure with a central cavity, resembling the structure of eukaryotic proteasomes.

Its subcellular location is the cytoplasm. The enzyme catalyses Hydrolysis of proteins to small peptides in the presence of ATP and magnesium. alpha-casein is the usual test substrate. In the absence of ATP, only oligopeptides shorter than five residues are hydrolyzed (such as succinyl-Leu-Tyr-|-NHMec, and Leu-Tyr-Leu-|-Tyr-Trp, in which cleavage of the -Tyr-|-Leu- and -Tyr-|-Trp bonds also occurs).. Its function is as follows. Cleaves peptides in various proteins in a process that requires ATP hydrolysis. Has a chymotrypsin-like activity. Plays a major role in the degradation of misfolded proteins. The sequence is that of ATP-dependent Clp protease proteolytic subunit 2 from Myxococcus xanthus (strain DK1622).